A 187-amino-acid polypeptide reads, in one-letter code: Adenylate kinase (187 aa).

Glycine 11–threonine 16 is a binding site for ATP. Residues serine 31–valine 60 are NMP. AMP-binding positions include threonine 32, arginine 37, aspartate 58–valine 60, glycine 86–arginine 89, and glutamine 93. The LID stretch occupies residues glycine 127–aspartate 137. Arginine 128 contributes to the ATP binding site. Arginine 134 and arginine 145 together coordinate AMP. ATP is bound at residue glycine 173.

The protein belongs to the adenylate kinase family. In terms of assembly, monomer.

The protein resides in the cytoplasm. The catalysed reaction is AMP + ATP = 2 ADP. It functions in the pathway purine metabolism; AMP biosynthesis via salvage pathway; AMP from ADP: step 1/1. Its function is as follows. Catalyzes the reversible transfer of the terminal phosphate group between ATP and AMP. Plays an important role in cellular energy homeostasis and in adenine nucleotide metabolism. In Leptospira borgpetersenii serovar Hardjo-bovis (strain JB197), this protein is Adenylate kinase.